The sequence spans 206 residues: MPIVGLFNKEGQKITDFELSDKVFGVEVNQYVMHQVVVALLANKRQGTQSAKTRAEVSGGGIKPWRQKGTGRARQGSIRSPQWIHGGVVFAVKPRSYRISVPKSARRLAMKSALSSKVEENQIVVLESLEMDTPKTKEVVKILDAFEAKKTLIVTAESNQNVYKSARNIQGVSVIPVNNLNVYDLLKFDKLIITKDAVSKIEEVYA.

Positions 51–76 (AKTRAEVSGGGIKPWRQKGTGRARQG) are disordered.

The protein belongs to the universal ribosomal protein uL4 family. Part of the 50S ribosomal subunit.

In terms of biological role, one of the primary rRNA binding proteins, this protein initially binds near the 5'-end of the 23S rRNA. It is important during the early stages of 50S assembly. It makes multiple contacts with different domains of the 23S rRNA in the assembled 50S subunit and ribosome. Forms part of the polypeptide exit tunnel. The sequence is that of Large ribosomal subunit protein uL4 from Clostridium kluyveri (strain ATCC 8527 / DSM 555 / NBRC 12016 / NCIMB 10680 / K1).